We begin with the raw amino-acid sequence, 257 residues long: Outer membrane protein YaiO (257 aa).

The signal sequence occupies residues 1-19 (MIKRTLLAAAIFSALPAYA).

The protein resides in the cell outer membrane. This Escherichia coli (strain K12) protein is Outer membrane protein YaiO (yaiO).